The chain runs to 206 residues: Proteasome subunit beta 2 (206 aa).

A propeptide spans 1–7 (MREAVSK) (removed in mature form; by autocatalysis). Thr-8 acts as the Nucleophile in catalysis.

It belongs to the peptidase T1B family. In terms of assembly, the 20S proteasome core is composed of 14 alpha and 14 beta subunits that assemble into four stacked heptameric rings, resulting in a barrel-shaped structure. The two inner rings, each composed of seven catalytic beta subunits, are sandwiched by two outer rings, each composed of seven alpha subunits. The catalytic chamber with the active sites is on the inside of the barrel. Has a gated structure, the ends of the cylinder being occluded by the N-termini of the alpha-subunits. Is capped at one or both ends by the proteasome regulatory ATPase, PAN.

Its subcellular location is the cytoplasm. It catalyses the reaction Cleavage of peptide bonds with very broad specificity.. The formation of the proteasomal ATPase PAN-20S proteasome complex, via the docking of the C-termini of PAN into the intersubunit pockets in the alpha-rings, triggers opening of the gate for substrate entry. Interconversion between the open-gate and close-gate conformations leads to a dynamic regulation of the 20S proteasome proteolysis activity. Functionally, component of the proteasome core, a large protease complex with broad specificity involved in protein degradation. This chain is Proteasome subunit beta 2, found in Desulfurococcus amylolyticus (strain DSM 18924 / JCM 16383 / VKM B-2413 / 1221n) (Desulfurococcus kamchatkensis).